The following is a 610-amino-acid chain: Tyrosine-protein kinase Drl (610 aa).

An N-terminal signal peptide occupies residues 1-20 (MAPNLLTIGLLLTLIASGQA). Residues 21-242 (HLNIFLNLHE…RENLVPPASG (222 aa)) are Extracellular-facing. Residues 24–155 (IFLNLHEVLR…NLIFKRKKIC (132 aa)) enclose the WIF domain. 3 N-linked (GlcNAc...) asparagine glycosylation sites follow: Asn-63, Asn-99, and Asn-143. Residues 202 to 230 (QAPEKQRPVVTESPVGRGNSGGSKRDFDP) form a disordered region. Residues 243–263 (LVTLIVGGILALVLVSTLILI) form a helical membrane-spanning segment. Topologically, residues 264–610 (AYCAKGPSKR…EFHTQITRYV (347 aa)) are cytoplasmic. The 264-residue stretch at 343 to 606 (VRLSCLVQEG…ICLSEFHTQI (264 aa)) folds into the Protein kinase domain. ATP is bound by residues 349–357 (VQEGNFGRI) and Lys-371. The active-site Proton acceptor is the Asp-468. The residue at position 498 (Tyr-498) is a Phosphotyrosine; by autocatalysis.

This sequence belongs to the protein kinase superfamily. Tyr protein kinase family. In the embryonic abdominal hemisegment, expression is restricted to cell body, axon and growth cone of a cluster of 20 ventral nerve cord interneurons. During muscle growth and attachment events in the embryonic abdominal hemisegment, expression is in somatic muscle fibers 21-23 at 10-13 hours and 2 patches of approximately 15 neighboring epidermal cells (dorsal and ventral attachment sites) at 6-13 hours.

The protein resides in the cell membrane. It carries out the reaction L-tyrosyl-[protein] + ATP = O-phospho-L-tyrosyl-[protein] + ADP + H(+). Probable coreceptor of Wnt proteins. Involved in neuronal pathway recognition and ventral muscle attachment site selection. Non-vital for development. May be part of a signal transduction cascade involved in learning and possibly memory. In Drosophila melanogaster (Fruit fly), this protein is Tyrosine-protein kinase Drl (drl).